The primary structure comprises 273 residues: Ribosomal RNA small subunit methyltransferase A (273 aa).

S-adenosyl-L-methionine-binding residues include asparagine 18, leucine 20, glycine 45, glutamate 66, aspartate 91, and asparagine 113.

It belongs to the class I-like SAM-binding methyltransferase superfamily. rRNA adenine N(6)-methyltransferase family. RsmA subfamily.

The protein resides in the cytoplasm. The enzyme catalyses adenosine(1518)/adenosine(1519) in 16S rRNA + 4 S-adenosyl-L-methionine = N(6)-dimethyladenosine(1518)/N(6)-dimethyladenosine(1519) in 16S rRNA + 4 S-adenosyl-L-homocysteine + 4 H(+). Its function is as follows. Specifically dimethylates two adjacent adenosines (A1518 and A1519) in the loop of a conserved hairpin near the 3'-end of 16S rRNA in the 30S particle. May play a critical role in biogenesis of 30S subunits. This Salmonella agona (strain SL483) protein is Ribosomal RNA small subunit methyltransferase A.